Reading from the N-terminus, the 344-residue chain is Phenylalanine--tRNA ligase alpha subunit (344 aa).

Mg(2+) is bound at residue E255.

The protein belongs to the class-II aminoacyl-tRNA synthetase family. Phe-tRNA synthetase alpha subunit type 1 subfamily. As to quaternary structure, tetramer of two alpha and two beta subunits. Mg(2+) is required as a cofactor.

It is found in the cytoplasm. The catalysed reaction is tRNA(Phe) + L-phenylalanine + ATP = L-phenylalanyl-tRNA(Phe) + AMP + diphosphate + H(+). The sequence is that of Phenylalanine--tRNA ligase alpha subunit from Sulfurihydrogenibium sp. (strain YO3AOP1).